The primary structure comprises 155 residues: Small ribosomal subunit protein uS7cz/uS7cy (155 aa).

It belongs to the universal ribosomal protein uS7 family. Part of the 30S ribosomal subunit.

Its subcellular location is the plastid. It is found in the chloroplast. Functionally, one of the primary rRNA binding proteins, it binds directly to 16S rRNA where it nucleates assembly of the head domain of the 30S subunit. In Atropa belladonna (Belladonna), this protein is Small ribosomal subunit protein uS7cz/uS7cy (rps7-A).